Consider the following 748-residue polypeptide: Translation factor GUF1 homolog 1, mitochondrial (748 aa).

The N-terminal 29 residues, 1-29, are a transit peptide targeting the mitochondrion; the sequence is MRVGCCLLLKPIRQRLCTASISSRHIMRW. The 183-residue stretch at 94 to 276 folds into the tr-type G domain; that stretch reads SHIRNFAVVA…AIIERVPPPT (183 aa). Residues 103-110, 167-171, and 221-224 contribute to the GTP site; these read AHVDHGKT, DTPGH, and TKMD.

The protein belongs to the TRAFAC class translation factor GTPase superfamily. Classic translation factor GTPase family. LepA subfamily.

The protein resides in the mitochondrion inner membrane. It catalyses the reaction GTP + H2O = GDP + phosphate + H(+). In terms of biological role, promotes mitochondrial protein synthesis. May act as a fidelity factor of the translation reaction, by catalyzing a one-codon backward translocation of tRNAs on improperly translocated ribosomes. Binds to mitochondrial ribosomes in a GTP-dependent manner. The sequence is that of Translation factor GUF1 homolog 1, mitochondrial from Trypanosoma cruzi (strain CL Brener).